Here is a 269-residue protein sequence, read N- to C-terminus: Cytolethal distending toxin subunit B homolog (269 aa).

The N-terminal stretch at 1 to 22 (MKKPVFFLLTMIICSYISFACA) is a signal peptide.

It localises to the secreted. In terms of biological role, produces a CDT (cytolethal distending toxin) activity, which causes DNA damage in intoxicated cells. This damage induces G2/M cell cycle arrest, chromatin fragmentation, cell distention and nucleus enlargement. This is Cytolethal distending toxin subunit B homolog (cdtB) from Salmonella typhi.